The chain runs to 157 residues: 2-C-methyl-D-erythritol 2,4-cyclodiphosphate synthase (157 aa).

Positions 8 and 10 each coordinate a divalent metal cation. 4-CDP-2-C-methyl-D-erythritol 2-phosphate is bound by residues 8–10 (DVH) and 34–35 (HS). His-42 lines the a divalent metal cation pocket. Residues 56-58 (DIG), 61-65 (FPDTD), 100-106 (AQAPKMA), 132-135 (TTTE), Phe-139, and Arg-142 each bind 4-CDP-2-C-methyl-D-erythritol 2-phosphate.

The protein belongs to the IspF family. Homotrimer. A divalent metal cation is required as a cofactor.

It carries out the reaction 4-CDP-2-C-methyl-D-erythritol 2-phosphate = 2-C-methyl-D-erythritol 2,4-cyclic diphosphate + CMP. It participates in isoprenoid biosynthesis; isopentenyl diphosphate biosynthesis via DXP pathway; isopentenyl diphosphate from 1-deoxy-D-xylulose 5-phosphate: step 4/6. Its function is as follows. Involved in the biosynthesis of isopentenyl diphosphate (IPP) and dimethylallyl diphosphate (DMAPP), two major building blocks of isoprenoid compounds. Catalyzes the conversion of 4-diphosphocytidyl-2-C-methyl-D-erythritol 2-phosphate (CDP-ME2P) to 2-C-methyl-D-erythritol 2,4-cyclodiphosphate (ME-CPP) with a corresponding release of cytidine 5-monophosphate (CMP). This Serratia proteamaculans (strain 568) protein is 2-C-methyl-D-erythritol 2,4-cyclodiphosphate synthase.